A 114-amino-acid chain; its full sequence is Progonadoliberin-2 (114 aa).

The first 24 residues, 1–24, serve as a signal peptide directing secretion; that stretch reads MASSRRGLLLLLMLLTAHPGPSEA. At Gly34 the chain carries Glycine amide. Residues 35–59 form a disordered region; that stretch reads GKRALSSAQDPQNALRPPAGSPAQA.

It belongs to the GnRH family.

It localises to the secreted. In terms of biological role, stimulates the secretion of gonadotropins; it stimulates the secretion of both luteinizing and follicle-stimulating hormones. The chain is Progonadoliberin-2 (GNRH2) from Macaca mulatta (Rhesus macaque).